Reading from the N-terminus, the 1238-residue chain is MPAPHRLYPRSLICLAQALLAWALLAWAPAQASQELTLVGKAAVPDVEVALDGDDWRWLARKRVLTLGVYAPDIPPFDVTYGERYEGLTADYMAIIAHNLGMQAKVLRYPTREQALSALESGQIDLIGTVNGTDGRQQSLRLSVPYAADHPVIVMPIGARHVPASNLAGQRLAVDINYLPKETLARAYPQATLHYFPSSEQALAAVAYGQADVFIGDALTTSHLVSQSYFNDVRVVAPAHIATGGESFGVRADNTRLLRVVNAVLEAIPPSEHRSLIYRWGLGSSISLDFAHPAYSAREQQWMADHPVVKVAVLNLFAPFTLFRTDEQFGGISAAVLQLLQLRTGLDFEIIGVDTVEELIAKLRSGEADMAGALFVNSARESFLSFSRPYVRNGMVIVTRQDPDAPVDADHLDGRTVALVRNSAAIPLLQRRYPQAKVVTADNPSEAMLMVANGQADAVVQTQISASYYVNRYFAGKLRIASALDLPPAEIALATTRGQTELMSILNKALYSISNDELASIISRWRGSDGDPRTWYAYRNEIYLLIGLGLLSALLFLSWIVYLRRQIRQRKRAERALNDQLEFMRVLIDGTPNPIYVRDKEGRMLLCNDAYLDTFGVTADAVLGKTIPEANVVGDPALAREMHEFLLTRVAAEREPRFEDRDVTLHGRTRHVYQWTIPYGDSLGELKGIIGGWIDITERAELLRKLHDAKESADAANRAKTTFLATMSHEIRTPMNAIIGMLELALLRPTDQEPDRQSIQVAYDSARSLLELIGDILDIAKIEAGKFDLAPVRTALRVLPEGAIRVFDGLARQKGIELVLKTDIVGVDDVLIDPLRMKQVLSNLVGNAIKFTTEGQVVLAVTARPDGDAAHVQFSVSDTGCGISEADQRQLFKPFSQVGGSAEAGPAPGTGLGLSISRRLVELMGGTLVMRSAPGVGTTVSVDLRLTMVEKSVQAAPPAAATAATPSKPQVSLRVLVVDDHKPNLMLLRQQLDYLGQRVIAADSGEAALALWREHAFDVVITDCNMPGISGYELARRIRAAEAAPGYGRTRCILFGFTASAQMDEAQRCRAAGMDDCLFKPIGVDALRQRLNEAVARAALPTPPSPQAAAPATDDATPTAFSAESILALTQNDEALIRQLLEEVIRTNRADVDQLQKLHQQADWPKVSDMAHRLAGGARVVDAKAMIDTVLALEKKAQGQAGPSPEIDGLVRTLAAQSAALETQLRAWLEQRPHQDQP.

An N-terminal signal peptide occupies residues 1–32 (MPAPHRLYPRSLICLAQALLAWALLAWAPAQA). The Cytoplasmic portion of the chain corresponds to 33 to 307 (SQELTLVGKA…REQQWMADHP (275 aa)). Residues 308 to 331 (VVKVAVLNLFAPFTLFRTDEQFGG) traverse the membrane as a helical segment. Residues 332-541 (ISAAVLQLLQ…PRTWYAYRNE (210 aa)) are Periplasmic-facing. A helical transmembrane segment spans residues 542–563 (IYLLIGLGLLSALLFLSWIVYL). Residues 564 to 1238 (RRQIRQRKRA…LEQRPHQDQP (675 aa)) are Cytoplasmic-facing. A PAS domain is found at 580–651 (QLEFMRVLID…MHEFLLTRVA (72 aa)). Residues 652–708 (AEREPRFEDRDVTLHGRTRHVYQWTIPYGDSLGELKGIIGGWIDITERAELLRKLHD) form the PAC domain. The region spanning 726 to 948 (TMSHEIRTPM…TVSVDLRLTM (223 aa)) is the Histidine kinase domain. His729 is subject to Phosphohistidine; by autocatalysis. In terms of domain architecture, Response regulatory spans 974 to 1095 (RVLVVDDHKP…ALRQRLNEAV (122 aa)). Asp1023 is modified (4-aspartylphosphate). The HPt domain maps to 1133–1228 (DEALIRQLLE…AALETQLRAW (96 aa)). Phosphohistidine is present on His1172.

Activation requires a sequential transfer of a phosphate group from a His in the primary transmitter domain, to an Asp in the receiver domain and to a His in the secondary transmitter domain.

The protein resides in the cell inner membrane. It catalyses the reaction ATP + protein L-histidine = ADP + protein N-phospho-L-histidine.. Functionally, member of the two-component regulatory system BvgS/BvgA. Phosphorylates BvgA via a four-step phosphorelay in response to environmental signals. The chain is Virulence sensor protein BvgS (bvgS) from Bordetella pertussis (strain Tohama I / ATCC BAA-589 / NCTC 13251).